The chain runs to 339 residues: Photosystem II assembly lipoprotein Ycf48 (339 aa).

The first 23 residues, 1–23 (MNRLIKFSFNLILIFVLGLGLSG), serve as a signal peptide directing secretion. Residue Cys-24 is the site of N-palmitoyl cysteine attachment. Cys-24 is lipidated: S-diacylglycerol cysteine.

The protein belongs to the Ycf48 family. In terms of assembly, part of early PSII assembly complexes which includes D1 (psbA) and PsbI; not found in mature PSII. Binds to the lumenal side of PSII complexes. Interacts with YidC.

It is found in the cellular thylakoid membrane. Functionally, a factor required for optimal assembly of photosystem II (PSII), acting in the early stages of PSII assembly. Also plays a role in replacement of photodamaged D1 (psbA). Assists YidC in synthesis of chlorophyll-binding proteins. The protein is Photosystem II assembly lipoprotein Ycf48 of Prochlorococcus marinus (strain SARG / CCMP1375 / SS120).